Consider the following 317-residue polypeptide: Large ribosomal subunit protein uL10 (317 aa).

Low complexity predominate over residues 280–290 (SASAAPAAGGA). A disordered region spans residues 280–317 (SASAAPAAGGATEKKEEAKKPESESEEEDDDMGFGLFD). Over residues 291–302 (TEKKEEAKKPES) the composition is skewed to basic and acidic residues. Residue serine 302 is modified to Phosphoserine. Serine 304 carries the post-translational modification Phosphoserine; by CK1.

It belongs to the universal ribosomal protein uL10 family. P0 forms a pentameric complex by interaction with dimers of P1 and P2.

The protein resides in the cytoplasm. Its subcellular location is the nucleus. In terms of biological role, ribosomal protein P0 is the functional equivalent of E.coli protein L10. This Drosophila melanogaster (Fruit fly) protein is Large ribosomal subunit protein uL10 (RpLP0).